We begin with the raw amino-acid sequence, 317 residues long: 4-hydroxy-3-methylbut-2-enyl diphosphate reductase (317 aa).

C12 contacts [4Fe-4S] cluster. The (2E)-4-hydroxy-3-methylbut-2-enyl diphosphate site is built by H43 and H81. The dimethylallyl diphosphate site is built by H43 and H81. Residues H43 and H81 each coordinate isopentenyl diphosphate. C103 contributes to the [4Fe-4S] cluster binding site. H131 contacts (2E)-4-hydroxy-3-methylbut-2-enyl diphosphate. Residue H131 coordinates dimethylallyl diphosphate. H131 contacts isopentenyl diphosphate. The active-site Proton donor is E133. T172 contributes to the (2E)-4-hydroxy-3-methylbut-2-enyl diphosphate binding site. C200 is a binding site for [4Fe-4S] cluster. (2E)-4-hydroxy-3-methylbut-2-enyl diphosphate-binding residues include S228, N230, and S273. 3 residues coordinate dimethylallyl diphosphate: S228, N230, and S273. 3 residues coordinate isopentenyl diphosphate: S228, N230, and S273.

Belongs to the IspH family. The cofactor is [4Fe-4S] cluster.

The catalysed reaction is isopentenyl diphosphate + 2 oxidized [2Fe-2S]-[ferredoxin] + H2O = (2E)-4-hydroxy-3-methylbut-2-enyl diphosphate + 2 reduced [2Fe-2S]-[ferredoxin] + 2 H(+). It catalyses the reaction dimethylallyl diphosphate + 2 oxidized [2Fe-2S]-[ferredoxin] + H2O = (2E)-4-hydroxy-3-methylbut-2-enyl diphosphate + 2 reduced [2Fe-2S]-[ferredoxin] + 2 H(+). It functions in the pathway isoprenoid biosynthesis; dimethylallyl diphosphate biosynthesis; dimethylallyl diphosphate from (2E)-4-hydroxy-3-methylbutenyl diphosphate: step 1/1. The protein operates within isoprenoid biosynthesis; isopentenyl diphosphate biosynthesis via DXP pathway; isopentenyl diphosphate from 1-deoxy-D-xylulose 5-phosphate: step 6/6. Functionally, catalyzes the conversion of 1-hydroxy-2-methyl-2-(E)-butenyl 4-diphosphate (HMBPP) into a mixture of isopentenyl diphosphate (IPP) and dimethylallyl diphosphate (DMAPP). Acts in the terminal step of the DOXP/MEP pathway for isoprenoid precursor biosynthesis. The sequence is that of 4-hydroxy-3-methylbut-2-enyl diphosphate reductase from Exiguobacterium sp. (strain ATCC BAA-1283 / AT1b).